The chain runs to 357 residues: DNA replication and repair protein RecF (357 aa).

G30 to T37 provides a ligand contact to ATP.

Belongs to the RecF family.

Its subcellular location is the cytoplasm. The RecF protein is involved in DNA metabolism; it is required for DNA replication and normal SOS inducibility. RecF binds preferentially to single-stranded, linear DNA. It also seems to bind ATP. In Shigella dysenteriae serotype 1 (strain Sd197), this protein is DNA replication and repair protein RecF.